The chain runs to 436 residues: Glutamyl-tRNA reductase (436 aa).

Substrate-binding positions include 49 to 52, Ser-109, 114 to 116, and Gln-120; these read TCNR and EGQ. The active-site Nucleophile is Cys-50. 198–203 contacts NADP(+); it reads GAGRMS.

This sequence belongs to the glutamyl-tRNA reductase family. As to quaternary structure, homodimer.

It catalyses the reaction (S)-4-amino-5-oxopentanoate + tRNA(Glu) + NADP(+) = L-glutamyl-tRNA(Glu) + NADPH + H(+). It functions in the pathway porphyrin-containing compound metabolism; protoporphyrin-IX biosynthesis; 5-aminolevulinate from L-glutamyl-tRNA(Glu): step 1/2. It participates in porphyrin-containing compound metabolism; chlorophyll biosynthesis. Catalyzes the NADPH-dependent reduction of glutamyl-tRNA(Glu) to glutamate 1-semialdehyde (GSA). The protein is Glutamyl-tRNA reductase of Prochlorococcus marinus (strain MIT 9301).